The primary structure comprises 198 residues: Phosphoheptose isomerase (198 aa).

An SIS domain is found at Met36–Gln198. Substrate is bound at residue Asn51–Gly53. Zn(2+) contacts are provided by His60 and Glu64. Substrate contacts are provided by residues Glu64, Asn93–Asp94, Ser119–Ser121, Ser124, and Gln174. Zn(2+) contacts are provided by Gln174 and His182.

It belongs to the SIS family. GmhA subfamily. In terms of assembly, homotetramer. Zn(2+) is required as a cofactor.

The protein localises to the cytoplasm. The catalysed reaction is 2 D-sedoheptulose 7-phosphate = D-glycero-alpha-D-manno-heptose 7-phosphate + D-glycero-beta-D-manno-heptose 7-phosphate. The protein operates within carbohydrate biosynthesis; D-glycero-D-manno-heptose 7-phosphate biosynthesis; D-glycero-alpha-D-manno-heptose 7-phosphate and D-glycero-beta-D-manno-heptose 7-phosphate from sedoheptulose 7-phosphate: step 1/1. Catalyzes the isomerization of sedoheptulose 7-phosphate in D-glycero-D-manno-heptose 7-phosphate. This Aromatoleum aromaticum (strain DSM 19018 / LMG 30748 / EbN1) (Azoarcus sp. (strain EbN1)) protein is Phosphoheptose isomerase.